The primary structure comprises 157 residues: 3-dehydroquinate dehydratase (157 aa).

Tyr29 functions as the Proton acceptor in the catalytic mechanism. 3 residues coordinate substrate: Asn80, His86, and Asp93. The active-site Proton donor is the His107. Substrate is bound by residues 108 to 109 (IS) and Arg118.

The protein belongs to the type-II 3-dehydroquinase family. As to quaternary structure, homododecamer.

It carries out the reaction 3-dehydroquinate = 3-dehydroshikimate + H2O. Its pathway is metabolic intermediate biosynthesis; chorismate biosynthesis; chorismate from D-erythrose 4-phosphate and phosphoenolpyruvate: step 3/7. In terms of biological role, catalyzes a trans-dehydration via an enolate intermediate. The protein is 3-dehydroquinate dehydratase (aroQ) of Streptomyces coelicolor (strain ATCC BAA-471 / A3(2) / M145).